A 199-amino-acid chain; its full sequence is Protein-methionine-sulfoxide reductase heme-binding subunit MsrQ (199 aa).

4 consecutive transmembrane segments (helical) span residues 10-30 (WLKVCLHLAGFLPLLWLFWAI), 82-102 (LWCFVWATLHLTSYALLELGI), 116-136 (PYLTLGIISWLVLLALTLTST), and 153-173 (VVYLVAILAPIHYLWSVKILS).

It belongs to the MsrQ family. As to quaternary structure, heterodimer of a catalytic subunit (MsrP) and a heme-binding subunit (MsrQ). It depends on FMN as a cofactor. Heme b serves as cofactor.

Its subcellular location is the cell inner membrane. Its function is as follows. Part of the MsrPQ system that repairs oxidized periplasmic proteins containing methionine sulfoxide residues (Met-O), using respiratory chain electrons. Thus protects these proteins from oxidative-stress damage caused by reactive species of oxygen and chlorine generated by the host defense mechanisms. MsrPQ is essential for the maintenance of envelope integrity under bleach stress, rescuing a wide series of structurally unrelated periplasmic proteins from methionine oxidation, including the primary periplasmic chaperone SurA and the lipoprotein Pal. MsrQ provides electrons for reduction to the reductase catalytic subunit MsrP, using the quinone pool of the respiratory chain. In Salmonella newport (strain SL254), this protein is Protein-methionine-sulfoxide reductase heme-binding subunit MsrQ.